The following is a 466-amino-acid chain: Zinc finger and SCAN domain-containing protein 26 (466 aa).

Residue Lys-21 forms a Glycyl lysine isopeptide (Lys-Gly) (interchain with G-Cter in SUMO2) linkage. Residues 42–124 (CKQFRQLRYE…GILEDLQLDR (83 aa)) form the SCAN box domain. Basic and acidic residues-rich tracts occupy residues 124 to 135 (RGKAGEQKDSAQ) and 163 to 173 (KPEERGKETRS). Residues 124 to 182 (RGKAGEQKDSAQRSRPTVLVGEPAPRREAREQPGCALPQKPEERGKETRSENGNLIAGT) are disordered. Residues 220-242 (SQCLETKERLVQNSGLIEHDRAH) form a C2H2-type 1; degenerate zinc finger. C2H2-type zinc fingers lie at residues 270 to 292 (HPCQ…QKIH), 298 to 320 (YQCK…LRIH), 326 to 348 (YLCI…QKIH), 354 to 376 (RECK…QRVH), 382 to 404 (HHCN…HRIH), 410 to 432 (FKCN…VRIH), and 438 to 460 (YKCS…QRHH).

It is found in the nucleus. Its function is as follows. May be involved in transcriptional regulation. The chain is Zinc finger and SCAN domain-containing protein 26 (Zscan26) from Mus musculus (Mouse).